Reading from the N-terminus, the 329-residue chain is Acetyl-coenzyme A carboxylase carboxyl transferase subunit alpha (329 aa).

A CoA carboxyltransferase C-terminal domain is found at 40–294 (QLETLAARRR…REAIERHLDE (255 aa)).

The protein belongs to the AccA family. Acetyl-CoA carboxylase is a heterohexamer composed of biotin carboxyl carrier protein (AccB), biotin carboxylase (AccC) and two subunits each of ACCase subunit alpha (AccA) and ACCase subunit beta (AccD).

The protein localises to the cytoplasm. The enzyme catalyses N(6)-carboxybiotinyl-L-lysyl-[protein] + acetyl-CoA = N(6)-biotinyl-L-lysyl-[protein] + malonyl-CoA. Its pathway is lipid metabolism; malonyl-CoA biosynthesis; malonyl-CoA from acetyl-CoA: step 1/1. In terms of biological role, component of the acetyl coenzyme A carboxylase (ACC) complex. First, biotin carboxylase catalyzes the carboxylation of biotin on its carrier protein (BCCP) and then the CO(2) group is transferred by the carboxyltransferase to acetyl-CoA to form malonyl-CoA. This is Acetyl-coenzyme A carboxylase carboxyl transferase subunit alpha from Prochlorococcus marinus (strain MIT 9313).